The chain runs to 367 residues: tRNA-specific 2-thiouridylase MnmA (367 aa).

ATP contacts are provided by residues Leu9–Ser16 and Phe35. Cys107 (nucleophile) is an active-site residue. A disulfide bridge links Cys107 with Cys205. Gly131 is a binding site for ATP. Positions Lys155–Gln157 are interaction with tRNA. Cys205 functions as the Cysteine persulfide intermediate in the catalytic mechanism.

The protein belongs to the MnmA/TRMU family.

The protein resides in the cytoplasm. The catalysed reaction is S-sulfanyl-L-cysteinyl-[protein] + uridine(34) in tRNA + AH2 + ATP = 2-thiouridine(34) in tRNA + L-cysteinyl-[protein] + A + AMP + diphosphate + H(+). Its function is as follows. Catalyzes the 2-thiolation of uridine at the wobble position (U34) of tRNA, leading to the formation of s(2)U34. This chain is tRNA-specific 2-thiouridylase MnmA, found in Petrotoga mobilis (strain DSM 10674 / SJ95).